Consider the following 167-residue polypeptide: MAALSSRCPRSAAGPAYLQEAARSAHWASPPLVPLRTFQSSLFSSGSFHSREEEEEGVSLLRTALVGQGPVPLFLGSLFCAGCRQGPSVWSCGEPVPRRIWVTASVTPSPRQALHPCSDSLDILKALHLLPAAFSPFIWVQVFAEPSNKESRGENDGGEERESANIY.

The tract at residues 148 to 167 (NKESRGENDGGEERESANIY) is disordered.

This is an uncharacterized protein from Homo sapiens (Human).